The following is a 102-amino-acid chain: NADH-quinone oxidoreductase subunit K (102 aa).

3 consecutive transmembrane segments (helical) span residues 6–26 (LEHG…GLMV), 30–50 (ILFV…AFVV), and 62–82 (VMFI…LAIL).

This sequence belongs to the complex I subunit 4L family. NDH-1 is composed of 13 different subunits. Subunits NuoA, H, J, K, L, M, N constitute the membrane sector of the complex.

The protein resides in the cell inner membrane. The catalysed reaction is a quinone + NADH + 5 H(+)(in) = a quinol + NAD(+) + 4 H(+)(out). In terms of biological role, NDH-1 shuttles electrons from NADH, via FMN and iron-sulfur (Fe-S) centers, to quinones in the respiratory chain. The immediate electron acceptor for the enzyme in this species is believed to be ubiquinone. Couples the redox reaction to proton translocation (for every two electrons transferred, four hydrogen ions are translocated across the cytoplasmic membrane), and thus conserves the redox energy in a proton gradient. In Pseudomonas aeruginosa (strain LESB58), this protein is NADH-quinone oxidoreductase subunit K.